The following is a 123-amino-acid chain: Small ribosomal subunit protein uS12 (123 aa).

The residue at position 89 (Asp89) is a 3-methylthioaspartic acid.

Belongs to the universal ribosomal protein uS12 family. As to quaternary structure, part of the 30S ribosomal subunit. Contacts proteins S8 and S17. May interact with IF1 in the 30S initiation complex.

Its function is as follows. With S4 and S5 plays an important role in translational accuracy. Interacts with and stabilizes bases of the 16S rRNA that are involved in tRNA selection in the A site and with the mRNA backbone. Located at the interface of the 30S and 50S subunits, it traverses the body of the 30S subunit contacting proteins on the other side and probably holding the rRNA structure together. The combined cluster of proteins S8, S12 and S17 appears to hold together the shoulder and platform of the 30S subunit. In Acidiphilium cryptum (strain JF-5), this protein is Small ribosomal subunit protein uS12.